Here is a 351-residue protein sequence, read N- to C-terminus: Putative [LysW]-L-2-aminoadipate/[LysW]-L-glutamate phosphate reductase (351 aa).

Residues 9–12 (SGFV) and 33–35 (SRR) each bind NADP(+). Cys-150 is an active-site residue. Asn-318 is a binding site for NADP(+).

The protein belongs to the NAGSA dehydrogenase family. Type 1 subfamily. LysY sub-subfamily.

It localises to the cytoplasm. It carries out the reaction [amino-group carrier protein]-C-terminal-N-(1-carboxy-5-oxopentan-1-yl)-L-glutamine + phosphate + NADP(+) = [amino-group carrier protein]-C-terminal-N-(1-carboxy-5-phosphooxy-5-oxopentan-1-yl)-L-glutamine + NADPH + H(+). It catalyses the reaction [amino-group carrier protein]-C-terminal-gamma-(L-glutamyl-5-semialdehyde)-L-glutamate + phosphate + NADP(+) = [amino-group carrier protein]-C-terminal-gamma-(5-phospho-L-glutamyl)-L-glutamate + NADPH + H(+). It functions in the pathway amino-acid biosynthesis; L-lysine biosynthesis via AAA pathway; L-lysine from L-alpha-aminoadipate (Thermus route): step 3/5. The protein operates within amino-acid biosynthesis; L-arginine biosynthesis. Its function is as follows. Involved in both the arginine and lysine biosynthetic pathways. In Pyrobaculum aerophilum (strain ATCC 51768 / DSM 7523 / JCM 9630 / CIP 104966 / NBRC 100827 / IM2), this protein is Putative [LysW]-L-2-aminoadipate/[LysW]-L-glutamate phosphate reductase.